Reading from the N-terminus, the 784-residue chain is Probable phosphoketolase (784 aa).

It belongs to the XFP family. Requires thiamine diphosphate as cofactor.

This chain is Probable phosphoketolase, found in Rhodopseudomonas palustris (strain HaA2).